Here is a 622-residue protein sequence, read N- to C-terminus: MITAADFYHVMTAMVPLYVAMILAYGSVKWWKIFTPDQCSGINRFVALFAVPLLSFHFIAANNPYAMNLRFLAADSLQKVIVLSLLFLWCKLSRNGSLDWTITLFSLSTLPNTLVMGIPLLKGMYGNFSGDLMVQIVVLQCIIWYTLMLFLFEYRGAKLLISEQFPDTAGSIVSIHVDSDIMSLDGRQPLETEAEIKEDGKLHVTVRRSNASRSDIYSRRSQGLSATPRPSNLTNAEIYSLQSSRNPTPRGSSFNHTDFYSMMASGGGRNSNFGPGEAVFGSKGPTPRPSNYEEDGGPAKPTAAGTAAGAGRFHYQSGGSGGGGGAHYPAPNPGMFSPNTGGGGGTAAKGNAPVVGGKRQDGNGRDLHMFVWSSSASPVSDVFGGGGGNHHADYSTATNDHQKDVKISVPQGNSNDNQYVEREEFSFGNKDDDSKVLATDGGNNISNKTTQAKVMPPTSVMTRLILIMVWRKLIRNPNSYSSLFGITWSLISFKWNIEMPALIAKSISILSDAGLGMAMFSLGLFMALNPRIIACGNRRAAFAAAMRFVVGPAVMLVASYAVGLRGVLLHVAIIQAALPQGIVPFVFAKEYNVHPDILSTAVIFGMLIALPITLLYYILLGL.

At 1–6 (MITAAD) the chain is on the extracellular side. A helical membrane pass occupies residues 7–27 (FYHVMTAMVPLYVAMILAYGS). At 28-44 (VKWWKIFTPDQCSGINR) the chain is on the cytoplasmic side. A helical membrane pass occupies residues 45-65 (FVALFAVPLLSFHFIAANNPY). Val-51 is a binding site for (indol-3-yl)acetate. Over 66-70 (AMNLR) the chain is Extracellular. A helical transmembrane segment spans residues 71–91 (FLAADSLQKVIVLSLLFLWCK). Residues 92–100 (LSRNGSLDW) are Cytoplasmic-facing. The chain crosses the membrane as a helical span at residues 101 to 121 (TITLFSLSTLPNTLVMGIPLL). (indol-3-yl)acetate contacts are provided by Asn-112 and Leu-114. The Extracellular portion of the chain corresponds to 122–131 (KGMYGNFSGD). N-linked (GlcNAc...) asparagine glycosylation is present at Asn-127. A helical membrane pass occupies residues 132 to 152 (LMVQIVVLQCIIWYTLMLFLF). Tyr-145 lines the (indol-3-yl)acetate pocket. Topologically, residues 153-482 (EYRGAKLLIS…LIRNPNSYSS (330 aa)) are cytoplasmic. A phosphoserine mark is found at Ser-209, Ser-212, Ser-221, and Ser-225. The segment at 213-233 (RSDIYSRRSQGLSATPRPSNL) is disordered. Phosphothreonine is present on Thr-227. Ser-231 is modified (phosphoserine). Residue Thr-248 is modified to Phosphothreonine. A phosphoserine mark is found at Ser-252, Ser-253, and Ser-271. The interval 268–362 (GRNSNFGPGE…PVVGGKRQDG (95 aa)) is disordered. A Phosphothreonine modification is found at Thr-286. Ser-290 is subject to Phosphoserine. Residues 298–311 (PAKPTAAGTAAGAG) are compositionally biased toward low complexity. Thr-302 bears the Phosphothreonine mark. Ser-317, Ser-320, and Ser-337 each carry phosphoserine. Position 340 is a phosphothreonine (Thr-340). Phosphoserine is present on residues Ser-374, Ser-377, Ser-408, Ser-414, Ser-426, Ser-434, and Ser-446. The helical transmembrane segment at 483–503 (LFGITWSLISFKWNIEMPALI) threads the bilayer. Residues 504 to 506 (AKS) are Extracellular-facing. Residues 507–527 (ISILSDAGLGMAMFSLGLFMA) form a helical membrane-spanning segment. Residues 528–541 (LNPRIIACGNRRAA) are Cytoplasmic-facing. The chain crosses the membrane as a helical span at residues 542–562 (FAAAMRFVVGPAVMLVASYAV). Residues 563 to 566 (GLRG) are Extracellular-facing. A helical membrane pass occupies residues 567–587 (VLLHVAIIQAALPQGIVPFVF). (indol-3-yl)acetate-binding residues include Ile-582 and Val-583. Over 588–601 (AKEYNVHPDILSTA) the chain is Cytoplasmic. Residues 602–622 (VIFGMLIALPITLLYYILLGL) traverse the membrane as a helical segment.

This sequence belongs to the auxin efflux carrier (TC 2.A.69.1) family. In terms of assembly, homodimer. Interacts with TOPP4. Interacts with FYPP1 and FYPP3. Component of a complex made of PINs (e.g. PIN1 and PIN2), MAB4/MELs (e.g. NPY1/MAB4 and NPY5/MEL1) and AGC kinases (e.g. D6PK and PID) at the plasma membrane. Binds directly to NPY5/MEL1. In terms of tissue distribution, expressed at the basal side of elongated parenchymatous xylem cells.

The protein localises to the cell membrane. Auxin efflux carrier activity is competitively inhibited by naptalamate (N-1-naphthylphthalamic acid, NPA) but activated by D6PK-mediated phosphorylation. Acts as a component of the auxin efflux carrier; this activity is enhanced when activated by D6PK-mediated phosphorylation. Binds auxins including indole-3-acetic acid (IAA), indole-3-butyric acid (IBA), indole-3-propionic acid (IPA) and 4-chloroindole-3-acetic acid (4-Cl-IAA). Seems to be involved in the basipetal auxin transport. Mediates the formation of auxin gradient which is required to ensure correct organogenesis. Coordinated polar localization of PIN1 is directly regulated by the vesicle trafficking process and apical-basal PIN1 polarity also depends on the phosphorylation of conserved serine residues by PID kinase. The ARF-GEF protein GNOM is required for the correct recycling of PIN1 between the plasma membrane and endosomal compartments. Recrutes NPY proteins (e.g. NPY1/MAB4 and NPY5/MEL1) to the plasma membrane in a polar basal localization in root epidermis; this activity is optimized by AGC kinases-mediated (e.g. D6PK and PID) phosphorylation that limits their lateral diffusion-based escape. In Arabidopsis thaliana (Mouse-ear cress), this protein is Auxin efflux carrier component 1.